The primary structure comprises 329 residues: MKVEIVELVVLLFSVTCVDAWLQGADCTRVADHKEHAPVTEAVCYLRCLSDALNKLYSEGEKKLLVTEEVYANASLILDDMEGRAGESSTYLSVIRGVMEEQTDRLEKLISYGNKMGNLVAKAGGLFAALEDSLKEVRKEIPGALIKTNKYYTSVAEIVRTVWEDVGEILWKETEAKCGSQKVEGVGEIQTECGAHTCPFADNGVAASAVDKYKGHCLYVGRNSYLRHCFNLPRGRLYRHGPVNTLGDALEWEENWSDYMNFELTVKVQKIFGPLIASFDVGIAPSTLAEMINNITSLQSRFNEVHSNFTSILFTTKLKTEVYNTDSTI.

A signal peptide spans 1-23; it reads MKVEIVELVVLLFSVTCVDAWLQ. N-linked (GlcNAc...) asparagine glycosylation is found at Asn-73, Asn-294, and Asn-308.

In terms of biological role, not known but may be related to activation of the variant surface glycoprotein genes. This chain is VSG expression site-associated protein 221A, found in Trypanosoma brucei brucei.